We begin with the raw amino-acid sequence, 335 residues long: Interleukin-12 subunit beta (335 aa).

The first 22 residues, 1–22, serve as a signal peptide directing secretion; it reads MCPQKLTISWFAIVLLVSPLMA. In terms of domain architecture, Ig-like C2-type spans 23 to 106; sequence MWELEKDVYV…LSHSHLLLHK (84 aa). A glycan (N-linked (GlcNAc...) asparagine) is linked at N47. A disulfide bridge links C50 with C90. 3 N-linked (GlcNAc...) asparagine glycosylation sites follow: N122, N132, and N220. Positions 233-324 constitute a Fibronectin type-III domain; that stretch reads PDPPKNLQMK…QDRYYNSSCS (92 aa).

Belongs to the IL-12B family. As to quaternary structure, heterodimer with IL12A; disulfide-linked. The heterodimer is known as interleukin IL-12. Heterodimer with IL23A; disulfide-linked. The heterodimer is known as interleukin IL-23. Also secreted as a monomer. Interacts with NBR1; this interaction promotes IL-12 secretion.

It localises to the secreted. In terms of biological role, cytokine that can act as a growth factor for activated T and NK cells, enhance the lytic activity of NK/lymphokine-activated killer cells, and stimulate the production of IFN-gamma by resting PBMC. Functionally, associates with IL23A to form the IL-23 interleukin, a heterodimeric cytokine which functions in innate and adaptive immunity. IL-23 may constitute with IL-17 an acute response to infection in peripheral tissues. IL-23 binds to a heterodimeric receptor complex composed of IL12RB1 and IL23R, activates the Jak-Stat signaling cascade, stimulates memory rather than naive T-cells and promotes production of pro-inflammatory cytokines. IL-23 induces autoimmune inflammation and thus may be responsible for autoimmune inflammatory diseases and may be important for tumorigenesis. This chain is Interleukin-12 subunit beta (Il12b), found in Mus musculus (Mouse).